Here is a 78-residue protein sequence, read N- to C-terminus: Putative DNA-binding protein MT0521 (78 aa).

The H-T-H motif DNA-binding region spans 24–45; sequence LLTVAEVAALMRVSKMTVYRLV.

The chain is Putative DNA-binding protein MT0521 from Mycobacterium tuberculosis (strain CDC 1551 / Oshkosh).